A 557-amino-acid polypeptide reads, in one-letter code: Urocanate hydratase (557 aa).

The disordered stretch occupies residues 1–20; it reads MSNPRHNEREVRSPRGDELN. NAD(+)-binding positions include 52–53, Gln130, 176–178, Glu196, Arg201, 242–243, 263–267, 273–274, and Tyr322; these read GG, GMG, NA, QTSAH, and YL. The active site involves Cys410. Gly492 is a binding site for NAD(+).

Belongs to the urocanase family. NAD(+) is required as a cofactor.

The protein resides in the cytoplasm. The catalysed reaction is 4-imidazolone-5-propanoate = trans-urocanate + H2O. Its pathway is amino-acid degradation; L-histidine degradation into L-glutamate; N-formimidoyl-L-glutamate from L-histidine: step 2/3. Its function is as follows. Catalyzes the conversion of urocanate to 4-imidazolone-5-propionate. This is Urocanate hydratase from Brucella abortus (strain S19).